Here is an 89-residue protein sequence, read N- to C-terminus: Small ribosomal subunit protein uS15 (89 aa).

A disordered region spans residues 1 to 22 (MALEKEEKSQIINNYQLHETDT). The segment covering 10–22 (QIINNYQLHETDT) has biased composition (polar residues).

The protein belongs to the universal ribosomal protein uS15 family. Part of the 30S ribosomal subunit. Forms a bridge to the 50S subunit in the 70S ribosome, contacting the 23S rRNA.

In terms of biological role, one of the primary rRNA binding proteins, it binds directly to 16S rRNA where it helps nucleate assembly of the platform of the 30S subunit by binding and bridging several RNA helices of the 16S rRNA. Forms an intersubunit bridge (bridge B4) with the 23S rRNA of the 50S subunit in the ribosome. The polypeptide is Small ribosomal subunit protein uS15 (Chloroflexus aggregans (strain MD-66 / DSM 9485)).